Reading from the N-terminus, the 294-residue chain is uncharacterized protein (294 aa).

Residues 5–25 (ILIILIIIIIVIISLIYLKNF) form a helical membrane-spanning segment. N-linked (GlcNAc...) asparagine; by host glycans are attached at residues asparagine 151, asparagine 170, asparagine 205, and asparagine 271.

It is found in the membrane. This is an uncharacterized protein from Acanthamoeba polyphaga (Amoeba).